Here is a 283-residue protein sequence, read N- to C-terminus: Hydrogenase expression/formation protein HoxQ (283 aa).

The tract at residues 1 to 29 (MNDDLPILPPGFGPGSHGEEERPDCPSMP) is disordered.

Belongs to the HupH/HyaF family.

This is Hydrogenase expression/formation protein HoxQ (hoxQ) from Azotobacter vinelandii.